The primary structure comprises 520 residues: GMP synthase [glutamine-hydrolyzing] (520 aa).

A Glutamine amidotransferase type-1 domain is found at 9-202 (HVLIVDFGSQ…THKIAGLKGD (194 aa)). Catalysis depends on Cys-86, which acts as the Nucleophile. Catalysis depends on residues His-176 and Glu-178. Positions 203 to 395 (WTMKAFREEA…LGLPPQFVGR (193 aa)) constitute a GMPS ATP-PPase domain. ATP is bound at residue 230–236 (SGGVDSS).

Homodimer.

The catalysed reaction is XMP + L-glutamine + ATP + H2O = GMP + L-glutamate + AMP + diphosphate + 2 H(+). It functions in the pathway purine metabolism; GMP biosynthesis; GMP from XMP (L-Gln route): step 1/1. Functionally, catalyzes the synthesis of GMP from XMP. The chain is GMP synthase [glutamine-hydrolyzing] from Phenylobacterium zucineum (strain HLK1).